The chain runs to 400 residues: Elongation factor Tu (400 aa).

One can recognise a tr-type G domain in the interval 10–209; it reads KEHVNIGTIG…QVDNWIDAPL (200 aa). Residues 19-26 are G1; that stretch reads GHVDHGKT. GTP is bound at residue 19–26; it reads GHVDHGKT. A Mg(2+)-binding site is contributed by Thr26. The tract at residues 61-65 is G2; that stretch reads GITIN. Residues 82–85 form a G3 region; that stretch reads DCPG. GTP is bound by residues 82 to 86 and 137 to 140; these read DCPGH and NKVD. The tract at residues 137-140 is G4; sequence NKVD. Positions 179-181 are G5; it reads SAL.

Belongs to the TRAFAC class translation factor GTPase superfamily. Classic translation factor GTPase family. EF-Tu/EF-1A subfamily. Monomer.

Its subcellular location is the cytoplasm. The enzyme catalyses GTP + H2O = GDP + phosphate + H(+). GTP hydrolase that promotes the GTP-dependent binding of aminoacyl-tRNA to the A-site of ribosomes during protein biosynthesis. The sequence is that of Elongation factor Tu from Mycoplasma mobile (strain ATCC 43663 / 163K / NCTC 11711) (Mesomycoplasma mobile).